The sequence spans 402 residues: UPF0261 protein mll9388 (402 aa).

It belongs to the UPF0261 family.

The protein is UPF0261 protein mll9388 of Mesorhizobium japonicum (strain LMG 29417 / CECT 9101 / MAFF 303099) (Mesorhizobium loti (strain MAFF 303099)).